The sequence spans 351 residues: Divinyl chlorophyll a/b light-harvesting protein PcbC (351 aa).

Transmembrane regions (helical) follow at residues 27–47 (FIAA…AFTL), 64–84 (LICL…GVIT), 89–109 (CTVI…GGLL), 203–223 (VMGG…FHIA), 244–264 (VLSY…FWCA), and 306–326 (LSNV…WHAL).

Belongs to the PsbB/PsbC family. IsiA/Pcb subfamily. In terms of assembly, the antenna complex consists of divinyl chlorophylls (a and b) and divinyl chlorophyll a/b binding proteins and binds more divinyl chlorophyll b than does the antenna complex from high-light-adapted Prochlorococcus. It depends on divinyl chlorophyll a as a cofactor. Divinyl chlorophyll b serves as cofactor.

The protein resides in the cellular thylakoid membrane. The antenna complex functions as a light receptor, it captures and delivers excitation energy to photosystems II and I. The Prochlorales pcb genes are not related to higher plant LHCs. This Prochlorococcus marinus (strain SARG / CCMP1375 / SS120) protein is Divinyl chlorophyll a/b light-harvesting protein PcbC (pcbC).